Reading from the N-terminus, the 826-residue chain is U-box domain-containing protein 4 (826 aa).

A coiled-coil region spans residues 172 to 204 (RSNQEILIEAVALERQKEMAEQSENNAEVEFLD). The region spanning 229–303 (AILADFFCPL…ANWCETNDVK (75 aa)) is the U-box domain. The tract at residues 330–501 (GADVSARKVS…TRRDLSDFSP (172 aa)) is disordered. Polar residues predominate over residues 347–360 (ASSSETGKPSFSSR). The span at 391–414 (DARRGSLNDFEDRSNDSRELRTDA) shows a compositional bias: basic and acidic residues. At S396 the chain carries Phosphoserine. The segment covering 416-428 (GRSSVSSTTRGSV) has biased composition (low complexity). Over residues 492–501 (TRRDLSDFSP) the composition is skewed to basic and acidic residues. ARM repeat units lie at residues 530 to 570 (NETR…LLAK), 573 to 612 (MDNRIVIGNSGAIVLLVELLYSTDSATQENAVTALLNLSI), 614 to 653 (DNNKKAIADAGAIEPLIHVLENGSSEAKENSAATLFSLSV), 655 to 694 (EENKIKIGQSGAIGPLVDLLGNGTPRGKKDAATALFNLSI), 696 to 734 (QENKAMIVQSGAVRYLIDLMDPAAGMVDKAVAVLANLAT), 736 to 775 (PEGRNAIGQEGGIPLLVEVVELGSARGKENAAAALLQLST), and 778 to 817 (GRFCNMVLQEGAVPPLVALSQSGTPRAREKAQALLSYFRN).

The enzyme catalyses S-ubiquitinyl-[E2 ubiquitin-conjugating enzyme]-L-cysteine + [acceptor protein]-L-lysine = [E2 ubiquitin-conjugating enzyme]-L-cysteine + N(6)-ubiquitinyl-[acceptor protein]-L-lysine.. Its pathway is protein modification; protein ubiquitination. Its function is as follows. Functions as an E3 ubiquitin ligase. The chain is U-box domain-containing protein 4 (PUB4) from Arabidopsis thaliana (Mouse-ear cress).